The chain runs to 202 residues: ATP-dependent Clp protease proteolytic subunit 1 (202 aa).

The Nucleophile role is filled by Ser101. Residue His126 is part of the active site.

The protein belongs to the peptidase S14 family. As to quaternary structure, fourteen ClpP subunits assemble into 2 heptameric rings which stack back to back to give a disk-like structure with a central cavity, resembling the structure of eukaryotic proteasomes.

It is found in the cytoplasm. It carries out the reaction Hydrolysis of proteins to small peptides in the presence of ATP and magnesium. alpha-casein is the usual test substrate. In the absence of ATP, only oligopeptides shorter than five residues are hydrolyzed (such as succinyl-Leu-Tyr-|-NHMec, and Leu-Tyr-Leu-|-Tyr-Trp, in which cleavage of the -Tyr-|-Leu- and -Tyr-|-Trp bonds also occurs).. Its function is as follows. Cleaves peptides in various proteins in a process that requires ATP hydrolysis. Has a chymotrypsin-like activity. Plays a major role in the degradation of misfolded proteins. The sequence is that of ATP-dependent Clp protease proteolytic subunit 1 from Rhizobium etli (strain ATCC 51251 / DSM 11541 / JCM 21823 / NBRC 15573 / CFN 42).